Consider the following 510-residue polypeptide: NAD(P)H-quinone oxidoreductase subunit 2 B, chloroplastic (510 aa).

13 consecutive transmembrane segments (helical) span residues 24 to 44, 57 to 77, 99 to 119, 124 to 144, 149 to 169, 183 to 203, 227 to 247, 295 to 315, 323 to 343, 354 to 374, 395 to 415, 418 to 438, and 484 to 504; these read LLLF…GLIL, IPWL…SLLF, IFQF…VEYI, MAIT…MFLC, LITI…LSGY, YLLM…WLYG, PGIS…LSPA, WHLL…LIAI, MLAY…IVGD, YMLF…LFGL, ALSL…AGFF, LYLF…IGLL, and MIVC…IIAI.

This sequence belongs to the complex I subunit 2 family. In terms of assembly, NDH is composed of at least 16 different subunits, 5 of which are encoded in the nucleus.

It localises to the plastid. The protein localises to the chloroplast thylakoid membrane. It carries out the reaction a plastoquinone + NADH + (n+1) H(+)(in) = a plastoquinol + NAD(+) + n H(+)(out). The catalysed reaction is a plastoquinone + NADPH + (n+1) H(+)(in) = a plastoquinol + NADP(+) + n H(+)(out). In terms of biological role, NDH shuttles electrons from NAD(P)H:plastoquinone, via FMN and iron-sulfur (Fe-S) centers, to quinones in the photosynthetic chain and possibly in a chloroplast respiratory chain. The immediate electron acceptor for the enzyme in this species is believed to be plastoquinone. Couples the redox reaction to proton translocation, and thus conserves the redox energy in a proton gradient. This is NAD(P)H-quinone oxidoreductase subunit 2 B, chloroplastic from Lactuca sativa (Garden lettuce).